A 399-amino-acid chain; its full sequence is Stearoyl-[acyl-carrier-protein] 9-desaturase, chloroplastic (399 aa).

Over residues 1–12 (MALNLNPVSTPF) the composition is skewed to polar residues. The N-terminal 35 residues, 1 to 35 (MALNLNPVSTPFQCRRLPSFSPRQTPSRRSPKFFM), are a transit peptide targeting the chloroplast. The tract at residues 1-57 (MALNLNPVSTPFQCRRLPSFSPRQTPSRRSPKFFMASTLSSSSPKEAESLKKPFSPP) is disordered. Positions 141, 179, 182, 232, 265, and 268 each coordinate Fe cation.

This sequence belongs to the fatty acid desaturase type 2 family. As to quaternary structure, homodimer. Fe(2+) is required as a cofactor.

It is found in the plastid. The protein localises to the chloroplast. It catalyses the reaction octadecanoyl-[ACP] + 2 reduced [2Fe-2S]-[ferredoxin] + O2 + 2 H(+) = (9Z)-octadecenoyl-[ACP] + 2 oxidized [2Fe-2S]-[ferredoxin] + 2 H2O. Its pathway is lipid metabolism; fatty acid metabolism. Converts stearoyl-ACP to oleoyl-ACP by introduction of a cis double bond between carbons 9 and 10 of the acyl chain. The polypeptide is Stearoyl-[acyl-carrier-protein] 9-desaturase, chloroplastic (Spinacia oleracea (Spinach)).